The chain runs to 357 residues: Peptide chain release factor 1 (357 aa).

Residue Gln235 is modified to N5-methylglutamine.

This sequence belongs to the prokaryotic/mitochondrial release factor family. Post-translationally, methylated by PrmC. Methylation increases the termination efficiency of RF1.

It is found in the cytoplasm. Peptide chain release factor 1 directs the termination of translation in response to the peptide chain termination codons UAG and UAA. This is Peptide chain release factor 1 from Alkaliphilus metalliredigens (strain QYMF).